Consider the following 1190-residue polypeptide: JNK-interacting protein (1190 aa).

The segment at 1–35 is disordered; the sequence is MACNLSPVNEMADSITSSTPSEIVYGGPGSPDEHR. Positions 24–112 constitute an RH1 domain; it reads VYGGPGSPDE…QTQYEREKAL (89 aa). Positions 78–165 form a coiled coil; the sequence is LDLAYLERDE…TDHASRLEER (88 aa). Positions 263–364 are disordered; it reads DEFSSDIEPS…DDTSDDGSLG (102 aa). Residues 277–292 show a composition bias toward polar residues; that stretch reads PQSSADALTSPITTKE. Residues 383–491 are a coiled coil; the sequence is KNALNIVKND…EESIKWTEMQ (109 aa). Residues 456–542 enclose the RH2 domain; the sequence is RKRFTRSEMQ…RASSSRGKMT (87 aa). The disordered stretch occupies residues 775 to 829; it reads EDGVPTYCSNDMKPSPKRTRDFSISEVAPVDSSAPVKEDPLPPPANRPGGRAALP.

Belongs to the JIP scaffold family. Expressed in neurons of the ventral cord, retrovesicular and preanal ganglia and nerve ring, intestinal cells, seam and hypodermal cells, body wall, head muscle and pharynx.

The protein localises to the cytoplasm. It localises to the perinuclear region. Its function is as follows. The JNK-interacting protein (JIP) group of scaffold proteins selectively mediates JNK signaling by aggregating specific components of the MAPK cascade to form a functional JNK signaling module. May function as a regulator of synaptic vesicle transport, through interactions with the JNK-signaling components and motor proteins. Binds specific components of the JNK signaling pathway namely jnk-1, jkk-1 and sek-1. Associates with components of the motor protein, kinesin-1. Pre-assembled unc-16 scaffolding complexes are then transported as a cargo of kinesin, to the required subcellular location. Regulates the retrograde transport of autophagosomes from the neurites to the cell body of AIY interneurons. This is JNK-interacting protein from Caenorhabditis elegans.